We begin with the raw amino-acid sequence, 507 residues long: MTKFKLLLAGSLVAIVSMGLLASNINEREKERVALNKTAHSQGIEGKAMSEEWARYYPRQFDSWKKTKESDNITDMLKEKPALVVAWAGYPFSKDYNAPRGHYYALQDNINTLRTGAPVDGKTGPLPSACWTCKSPDVPRIIEQDGELEYFTGKWAKYGDEIVNTIGCYNCHDDKSAELKSKVPYLDRGLSAAGFKTFAESTHQEKRSLVCAQCHVEYYFKKTEWKDDKGVDKTAMVVTLPWSKGISTEQMEAYYDEINFADWTHGISKTPMLKAQHPDWELYKTGIHGQKGVSCADCHMPYTQEGAVKYSDHKVGNPLDNMDKSCMNCHRESEQKLKDIVKQKFERKEFLQDIAFDNIGKAHLETGKAMELGATDAELKEIRTHIRHAQWRADMAIAGHGSFFHAPEEVLRLLASGNEEAQKARIKLVKVLAKYGAIDYVAPDFETKEKAQKLAKVDMEAFIAEKLKFKQTLEQEWKKQAIAKGRLNPESLKGVDEKSSYYDKTKK.

A signal peptide spans 1 to 22; sequence MTKFKLLLAGSLVAIVSMGLLA. Heme c-binding residues include histidine 102, cysteine 130, cysteine 133, lysine 134, cysteine 168, cysteine 171, histidine 172, cysteine 211, cysteine 214, and histidine 215. Positions 217, 218, 274, and 276 each coordinate Ca(2+). Tyrosine 218 lines the substrate pocket. Histidine 277 serves as a coordination point for substrate. Residues histidine 288, cysteine 295, cysteine 298, histidine 299, histidine 313, cysteine 326, cysteine 329, histidine 330, and histidine 405 each contribute to the heme c site.

This sequence belongs to the cytochrome c-552 family. In terms of assembly, homodimer. Interacts with NrfH. May form a heterotetramer with NrfH. It depends on Ca(2+) as a cofactor. Heme c serves as cofactor.

It is found in the periplasm. The catalysed reaction is 6 Fe(III)-[cytochrome c] + NH4(+) + 2 H2O = 6 Fe(II)-[cytochrome c] + nitrite + 8 H(+). It participates in nitrogen metabolism; nitrate reduction (assimilation). Functionally, catalyzes the reduction of nitrite to ammonia, consuming six electrons in the process. Has very low activity toward hydroxylamine, and even lower activity toward sulfite. Sulfite reductase activity is maximal at neutral pH. This is Cytochrome c-552 (nrfA) from Wolinella succinogenes (strain ATCC 29543 / DSM 1740 / CCUG 13145 / JCM 31913 / LMG 7466 / NCTC 11488 / FDC 602W) (Vibrio succinogenes).